A 777-amino-acid polypeptide reads, in one-letter code: 1,4-alpha-glucan branching enzyme GlgB (777 aa).

Asp408 functions as the Nucleophile in the catalytic mechanism. Glu461 acts as the Proton donor in catalysis.

This sequence belongs to the glycosyl hydrolase 13 family. GlgB subfamily. As to quaternary structure, monomer.

The enzyme catalyses Transfers a segment of a (1-&gt;4)-alpha-D-glucan chain to a primary hydroxy group in a similar glucan chain.. It participates in glycan biosynthesis; glycogen biosynthesis. Functionally, catalyzes the formation of the alpha-1,6-glucosidic linkages in glycogen by scission of a 1,4-alpha-linked oligosaccharide from growing alpha-1,4-glucan chains and the subsequent attachment of the oligosaccharide to the alpha-1,6 position. The protein is 1,4-alpha-glucan branching enzyme GlgB of Actinobacillus pleuropneumoniae serotype 3 (strain JL03).